Here is a 514-residue protein sequence, read N- to C-terminus: Cytochrome P450 94A1 (514 aa).

The chain crosses the membrane as a helical span at residues 7–29 (EVLLPYLLPLLLLILPTTIFFLT). Position 458 (Cys-458) interacts with heme.

It belongs to the cytochrome P450 family. Heme serves as cofactor.

It is found in the endoplasmic reticulum membrane. Functionally, catalyzes the omega-hydroxylation of various fatty acids (FA) from 10 to 18 carbon atoms. The substrate specificity is higher for laurate &gt; palmitate &gt; myristate &gt; linolenate &gt; linoleate &gt; oleate &gt; caprate. May play a minor role in cutin synthesis and could be involved in plant defense. In Vicia sativa (Spring vetch), this protein is Cytochrome P450 94A1 (CYP94A1).